Reading from the N-terminus, the 271-residue chain is MPSLTPRCIIVRHGQTEWSKSGQYTGLTDLPLTPYGEGQMLRTGESVFRNNQFLNPDNITYIFTSPRLRARQTVDLVLKPLSDEQRAKIRVVVDDDLREWEYGDYEGMLTREIIELRKSRGLDKERPWNIWRDGCENGETTQQIGLRLSRAIARIQNLHRKHQSEGRASDIMVFAHGHALRYFAAIWFGLGVQKKCETIEEIQNVKSYDDDTVPYVKLESYRHLVDNPCFLLDAGGIGVLSYAHHNIDEPALELAGPFVSPPEEESQHGDV.

Arg12 is a substrate binding site. The active-site Tele-phosphohistidine intermediate is His13. Residues Tyr24–Thr25, Arg69, Glu99–Tyr102, Arg181, and His244 contribute to the substrate site. Catalysis depends on Glu99, which acts as the Proton donor/acceptor.

It belongs to the phosphoglycerate mutase family. SHB17 subfamily. In terms of assembly, homodimer.

It is found in the cytoplasm. The protein localises to the nucleus. It catalyses the reaction D-sedoheptulose 1,7-bisphosphate + H2O = D-sedoheptulose 7-phosphate + phosphate. Sedoheptulose 1,7-bisphosphatase involved in riboneogenesis. Dephosphorylates sedoheptulose 1,7-bisphosphate (SBP), which is converted via the non-oxidative pentose phosphate pathway to ribose-5-phosphate. Has a fructose 1,6-bisphosphatase activity in vitro, but this is probably not biologically relevant, since deletion does not affect fructose 1,6-biphosphate (FBP) levels. The chain is Sedoheptulose 1,7-bisphosphatase (SHB17) from Saccharomyces cerevisiae (strain ATCC 204508 / S288c) (Baker's yeast).